The following is a 138-amino-acid chain: Cysteine desulfuration protein SufE (138 aa).

Residue C51 is the Cysteine persulfide intermediate of the active site.

It belongs to the SufE family. As to quaternary structure, homodimer. Interacts with SufS.

Its subcellular location is the cytoplasm. It participates in cofactor biosynthesis; iron-sulfur cluster biosynthesis. Participates in cysteine desulfuration mediated by SufS. Cysteine desulfuration mobilizes sulfur from L-cysteine to yield L-alanine and constitutes an essential step in sulfur metabolism for biosynthesis of a variety of sulfur-containing biomolecules. Functions as a sulfur acceptor for SufS, by mediating the direct transfer of the sulfur atom from the S-sulfanylcysteine of SufS, an intermediate product of cysteine desulfuration process. The protein is Cysteine desulfuration protein SufE of Escherichia fergusonii (strain ATCC 35469 / DSM 13698 / CCUG 18766 / IAM 14443 / JCM 21226 / LMG 7866 / NBRC 102419 / NCTC 12128 / CDC 0568-73).